Consider the following 338-residue polypeptide: Phenylalanine--tRNA ligase alpha subunit (338 aa).

E252 serves as a coordination point for Mg(2+).

The protein belongs to the class-II aminoacyl-tRNA synthetase family. Phe-tRNA synthetase alpha subunit type 1 subfamily. As to quaternary structure, tetramer of two alpha and two beta subunits. Requires Mg(2+) as cofactor.

The protein localises to the cytoplasm. It catalyses the reaction tRNA(Phe) + L-phenylalanine + ATP = L-phenylalanyl-tRNA(Phe) + AMP + diphosphate + H(+). This is Phenylalanine--tRNA ligase alpha subunit from Azotobacter vinelandii (strain DJ / ATCC BAA-1303).